Reading from the N-terminus, the 182-residue chain is Ribulose bisphosphate carboxylase small subunit, chloroplastic (182 aa).

Residues 1-58 (MASSMLSTATVASINRVSPAQATMVAPFTGLKSTPVFPTTRKTNSDITSITSNGGKVQ) constitute a chloroplast transit peptide.

This sequence belongs to the RuBisCO small chain family. In terms of assembly, heterohexadecamer of 8 large and 8 small subunits.

The protein localises to the plastid. It is found in the chloroplast. In terms of biological role, ruBisCO catalyzes two reactions: the carboxylation of D-ribulose 1,5-bisphosphate, the primary event in carbon dioxide fixation, as well as the oxidative fragmentation of the pentose substrate. Both reactions occur simultaneously and in competition at the same active site. Although the small subunit is not catalytic it is essential for maximal activity. The protein is Ribulose bisphosphate carboxylase small subunit, chloroplastic of Manihot esculenta (Cassava).